Here is a 349-residue protein sequence, read N- to C-terminus: Beta-hexosaminidase (349 aa).

Substrate is bound by residues D64, R72, R138, and 168-169; that span reads KH. H181 acts as the Proton donor/acceptor in catalysis. D252 serves as the catalytic Nucleophile.

The protein belongs to the glycosyl hydrolase 3 family. NagZ subfamily.

It is found in the cytoplasm. It carries out the reaction Hydrolysis of terminal non-reducing N-acetyl-D-hexosamine residues in N-acetyl-beta-D-hexosaminides.. It participates in cell wall biogenesis; peptidoglycan recycling. Functionally, plays a role in peptidoglycan recycling by cleaving the terminal beta-1,4-linked N-acetylglucosamine (GlcNAc) from peptide-linked peptidoglycan fragments, giving rise to free GlcNAc, anhydro-N-acetylmuramic acid and anhydro-N-acetylmuramic acid-linked peptides. The sequence is that of Beta-hexosaminidase from Methylobacillus flagellatus (strain ATCC 51484 / DSM 6875 / VKM B-1610 / KT).